The following is a 258-amino-acid chain: Exu regulon transcriptional regulator (258 aa).

Residues 7 to 75 (RRLYQQLAAD…KGSGIHVVSN (69 aa)) enclose the HTH gntR-type domain. The H-T-H motif DNA-binding region spans 35–54 (ERFIADEKNVSRTVVREAII).

Its function is as follows. Repressor for the exu regulon that encode genes involved in hexuronate utilization. It regulates the ExuT, UxaCA and UxuRAB operons. Binds D-tagaturonate and D-fructuronate as inducers. In Escherichia coli O157:H7, this protein is Exu regulon transcriptional regulator (exuR).